A 485-amino-acid polypeptide reads, in one-letter code: Glutamyl-tRNA(Gln) amidotransferase subunit A (485 aa).

Catalysis depends on charge relay system residues K79 and S154. The active-site Acyl-ester intermediate is the S178.

The protein belongs to the amidase family. GatA subfamily. In terms of assembly, heterotrimer of A, B and C subunits.

The enzyme catalyses L-glutamyl-tRNA(Gln) + L-glutamine + ATP + H2O = L-glutaminyl-tRNA(Gln) + L-glutamate + ADP + phosphate + H(+). Allows the formation of correctly charged Gln-tRNA(Gln) through the transamidation of misacylated Glu-tRNA(Gln) in organisms which lack glutaminyl-tRNA synthetase. The reaction takes place in the presence of glutamine and ATP through an activated gamma-phospho-Glu-tRNA(Gln). This Clostridium botulinum (strain Kyoto / Type A2) protein is Glutamyl-tRNA(Gln) amidotransferase subunit A.